The chain runs to 242 residues: Lactate utilization protein A 2 (242 aa).

It belongs to the LutA/YkgE family.

Its function is as follows. Is involved in L-lactate degradation and allows cells to grow with lactate as the sole carbon source. The polypeptide is Lactate utilization protein A 2 (Bacillus cereus (strain 03BB102)).